The following is a 92-amino-acid chain: C-C motif chemokine 3 (92 aa).

An N-terminal signal peptide occupies residues 1–23 (MKVSTAALAVLLCTMALWNEVFS). Cystine bridges form between C34–C57 and C35–C73.

The protein belongs to the intercrine beta (chemokine CC) family. Self-associates. Also heterodimer of MIP-1-alpha(4-69) and MIP-1-beta(3-69). Interacts with CCR1.

The protein resides in the secreted. Monokine with inflammatory and chemokinetic properties. Binds to CCR1, CCR4 and CCR5. One of the major HIV-suppressive factors produced by CD8+ T-cells. Recombinant MIP-1-alpha induces a dose-dependent inhibition of different strains of HIV-1, HIV-2, and simian immunodeficiency virus (SIV). In Rattus norvegicus (Rat), this protein is C-C motif chemokine 3 (Ccl3).